A 203-amino-acid chain; its full sequence is Small ribosomal subunit protein uS4c (203 aa).

Positions 89–152 (MRLDNILFRL…QSRTLIQNSL (64 aa)) constitute an S4 RNA-binding domain.

The protein belongs to the universal ribosomal protein uS4 family. In terms of assembly, part of the 30S ribosomal subunit. Contacts protein S5. The interaction surface between S4 and S5 is involved in control of translational fidelity.

Its subcellular location is the plastid. In terms of biological role, one of the primary rRNA binding proteins, it binds directly to 16S rRNA where it nucleates assembly of the body of the 30S subunit. Functionally, with S5 and S12 plays an important role in translational accuracy. The polypeptide is Small ribosomal subunit protein uS4c (rps4) (Orobanche minor (Small broomrape)).